We begin with the raw amino-acid sequence, 432 residues long: Testis-specific Y-encoded-like protein 1 (432 aa).

3 disordered regions span residues 1–31, 54–110, and 116–135; these read MSGR…PDPS, ALPP…LETA, and TDDS…LSRE. Residue Lys160 forms a Glycyl lysine isopeptide (Lys-Gly) (interchain with G-Cter in SUMO2) linkage.

Belongs to the nucleosome assembly protein (NAP) family. In terms of processing, ubiquitinated by the CRL2(APPBP2) complex, which recognizes the Arg-Xaa-Xaa-Gly sequence at the C-terminus, leading to its degradation.

It is found in the nucleus. It localises to the nucleolus. This Bos taurus (Bovine) protein is Testis-specific Y-encoded-like protein 1 (TSPYL1).